Consider the following 236-residue polypeptide: Syntaxin-8 (236 aa).

Residues M1–G215 are Cytoplasmic-facing. Residues V42–A65 adopt a coiled-coil conformation. One can recognise a t-SNARE coiled-coil homology domain in the interval Q145–V207. The residue at position 160 (S160) is a Phosphoserine. A helical; Anchor for type IV membrane protein membrane pass occupies residues M216–V232. Residues W233–N236 are Vesicular-facing.

This sequence belongs to the syntaxin family. As to quaternary structure, forms a SNARE complex with STX7, VTI1B and VAMP8 which functions in the homotypic fusion of late endosomes. Part of the SNARE core complex containing STX7, VAMP8 and VTI1B. Interacts with VAMP8. Interacts with HECTD3. Interacts with TPC1. In terms of processing, ubiquitinated by HECTD3. In terms of tissue distribution, highly expressed in heart. Also found in brain, kidney, liver, lung, placenta, skeletal muscle, spleen and pancreas.

It localises to the membrane. Vesicle trafficking protein that functions in the early secretory pathway, possibly by mediating retrograde transport from cis-Golgi membranes to the ER. The protein is Syntaxin-8 (STX8) of Homo sapiens (Human).